The chain runs to 693 residues: Elongation factor G (693 aa).

In terms of domain architecture, tr-type G spans 8-283 (PQQRNIGIMA…AVVEYLPSPV (276 aa)). Residues 17-24 (AHIDAGKT), 81-85 (DTPGH), and 135-138 (NKMD) each bind GTP.

It belongs to the TRAFAC class translation factor GTPase superfamily. Classic translation factor GTPase family. EF-G/EF-2 subfamily.

It localises to the cytoplasm. Functionally, catalyzes the GTP-dependent ribosomal translocation step during translation elongation. During this step, the ribosome changes from the pre-translocational (PRE) to the post-translocational (POST) state as the newly formed A-site-bound peptidyl-tRNA and P-site-bound deacylated tRNA move to the P and E sites, respectively. Catalyzes the coordinated movement of the two tRNA molecules, the mRNA and conformational changes in the ribosome. In Oleidesulfovibrio alaskensis (strain ATCC BAA-1058 / DSM 17464 / G20) (Desulfovibrio alaskensis), this protein is Elongation factor G.